Here is a 148-residue protein sequence, read N- to C-terminus: Lipoprotein signal peptidase (148 aa).

The next 2 membrane-spanning stretches (helical) occupy residues 57–77 (VLLV…FIKY) and 88–105 (VSFI…RIFY). Active-site residues include D110 and D129. Residues 124-144 (TFNIADILVVVGTIMLAIFLL) form a helical membrane-spanning segment.

Belongs to the peptidase A8 family.

It localises to the cell membrane. The enzyme catalyses Release of signal peptides from bacterial membrane prolipoproteins. Hydrolyzes -Xaa-Yaa-Zaa-|-(S,diacylglyceryl)Cys-, in which Xaa is hydrophobic (preferably Leu), and Yaa (Ala or Ser) and Zaa (Gly or Ala) have small, neutral side chains.. It participates in protein modification; lipoprotein biosynthesis (signal peptide cleavage). Functionally, this protein specifically catalyzes the removal of signal peptides from prolipoproteins. This chain is Lipoprotein signal peptidase, found in Clostridium novyi (strain NT).